Reading from the N-terminus, the 321-residue chain is CPX chromosomal region candidate gene 1 protein homolog (321 aa).

The tract at residues 1 to 83 (MSSPTKEGSD…TEIQKDQREE (83 aa)) is disordered. Composition is skewed to polar residues over residues 21-32 (NEPSNDCTTDIE) and 44-60 (VETN…TSQE).

The polypeptide is CPX chromosomal region candidate gene 1 protein homolog (CPXCR1) (Macaca fascicularis (Crab-eating macaque)).